Reading from the N-terminus, the 88-residue chain is Apolipoprotein C-I (88 aa).

The N-terminal stretch at 1-26 (MRLFLSLPVLVVVLAMVLEGPAPAQA) is a signal peptide.

This sequence belongs to the apolipoprotein C1 family.

The protein localises to the secreted. Its function is as follows. Inhibitor of lipoprotein binding to the low density lipoprotein (LDL) receptor, LDL receptor-related protein, and very low density lipoprotein (VLDL) receptor. Associates with high density lipoproteins (HDL) and the triacylglycerol-rich lipoproteins in the plasma and makes up about 10% of the protein of the VLDL and 2% of that of HDL. Appears to interfere directly with fatty acid uptake and is also the major plasma inhibitor of cholesteryl ester transfer protein (CETP). Binds free fatty acids and reduces their intracellular esterification. Modulates the interaction of APOE with beta-migrating VLDL and inhibits binding of beta-VLDL to the LDL receptor-related protein. The polypeptide is Apolipoprotein C-I (APOC1) (Ailurus fulgens (Himalayan red panda)).